We begin with the raw amino-acid sequence, 248 residues long: ATP synthase subunit a, chloroplastic (248 aa).

A run of 5 helical transmembrane segments spans residues 38–58, 96–116, 135–155, 200–220, and 221–241; these read QVLI…AIAV, VPFI…GALL, INTT…AGLT, LVVV…VMFL, and GLFT…AYIG.

The protein belongs to the ATPase A chain family. F-type ATPases have 2 components, CF(1) - the catalytic core - and CF(0) - the membrane proton channel. CF(1) has five subunits: alpha(3), beta(3), gamma(1), delta(1), epsilon(1). CF(0) has four main subunits: a, b, b' and c.

It is found in the plastid. It localises to the chloroplast thylakoid membrane. Key component of the proton channel; it plays a direct role in the translocation of protons across the membrane. The polypeptide is ATP synthase subunit a, chloroplastic (Nymphaea alba (White water-lily)).